The following is a 231-amino-acid chain: Lipoprotein-releasing system ATP-binding protein LolD (231 aa).

One can recognise an ABC transporter domain in the interval 11–231 (LQAEHLGKVY…HMENGRLQPD (221 aa)). ATP is bound at residue 47-54 (GASGSGKS).

This sequence belongs to the ABC transporter superfamily. Lipoprotein translocase (TC 3.A.1.125) family. In terms of assembly, the complex is composed of two ATP-binding proteins (LolD) and two transmembrane proteins (LolC and LolE).

The protein localises to the cell inner membrane. Part of the ABC transporter complex LolCDE involved in the translocation of mature outer membrane-directed lipoproteins, from the inner membrane to the periplasmic chaperone, LolA. Responsible for the formation of the LolA-lipoprotein complex in an ATP-dependent manner. The protein is Lipoprotein-releasing system ATP-binding protein LolD of Bordetella bronchiseptica (strain ATCC BAA-588 / NCTC 13252 / RB50) (Alcaligenes bronchisepticus).